Here is a 141-residue protein sequence, read N- to C-terminus: Large ribosomal subunit protein uL16 (141 aa).

It belongs to the universal ribosomal protein uL16 family. In terms of assembly, part of the 50S ribosomal subunit.

In terms of biological role, binds 23S rRNA and is also seen to make contacts with the A and possibly P site tRNAs. This Campylobacter fetus subsp. fetus (strain 82-40) protein is Large ribosomal subunit protein uL16.